We begin with the raw amino-acid sequence, 306 residues long: Curved DNA-binding protein (306 aa).

The J domain maps to 5-69; the sequence is DYYAIMGVKP…QRRAEYDQMW (65 aa).

The protein resides in the cytoplasm. It is found in the nucleoid. Its function is as follows. DNA-binding protein that preferentially recognizes a curved DNA sequence. It is probably a functional analog of DnaJ; displays overlapping activities with DnaJ, but functions under different conditions, probably acting as a molecular chaperone in an adaptive response to environmental stresses other than heat shock. Lacks autonomous chaperone activity; binds native substrates and targets them for recognition by DnaK. Its activity is inhibited by the binding of CbpM. The protein is Curved DNA-binding protein of Escherichia coli (strain SMS-3-5 / SECEC).